The primary structure comprises 261 residues: Eukaryotic translation initiation factor 3 subunit G (261 aa).

The segment at glutamine 156–glutamate 180 is disordered. The segment covering glycine 168–glutamate 180 has biased composition (basic and acidic residues). The RRM domain occupies asparagine 181–proline 259.

The protein belongs to the eIF-3 subunit G family. Component of the eukaryotic translation initiation factor 3 (eIF-3) complex.

It is found in the cytoplasm. In terms of biological role, RNA-binding component of the eukaryotic translation initiation factor 3 (eIF-3) complex, which is involved in protein synthesis of a specialized repertoire of mRNAs and, together with other initiation factors, stimulates binding of mRNA and methionyl-tRNAi to the 40S ribosome. The eIF-3 complex specifically targets and initiates translation of a subset of mRNAs involved in cell proliferation. This subunit can bind 18S rRNA. The chain is Eukaryotic translation initiation factor 3 subunit G from Caenorhabditis briggsae.